We begin with the raw amino-acid sequence, 35 residues long: Alpha-amanitin proprotein 1 (35 aa).

Positions 1–10 (MFDTNATRLP) are excised as a propeptide. Ile11 carries the post-translational modification (3R,4R)-4,5-dihydroxyisoleucine; in form alpha-amanitin. (3R,4S)-4-hydroxyisoleucine; in form gamma-amanitin is present on Ile11. Residues 11–18 (IWGIGCNP) constitute a cross-link (cyclopeptide (Ile-Pro)). The 2'-cysteinyl-6'-hydroxytryptophan sulfoxide (Trp-Cys) cross-link spans 12–16 (WGIGC). Pro18 is subject to 4-hydroxyproline. Residues 19-35 (WTAEHVDQTLASGNDIC) constitute a propeptide that is removed on maturation.

This sequence belongs to the MSDIN fungal toxin family. In terms of processing, processed by the macrocyclase-peptidase enzyme POPB to yield a toxic bicyclic octapeptide. POPB first removes 10 residues from the N-terminus. Conformational trapping of the remaining peptide forces the enzyme to release this intermediate rather than proceed to macrocyclization. The enzyme rebinds the remaining peptide in a different conformation and catalyzes macrocyclization of the N-terminal 8 residues.

In terms of biological role, major toxin belonging to the bicyclic octapeptides amatoxins that acts by binding non-competitively to RNA polymerase II and greatly slowing the elongation of transcripts from target promoters. The sequence is that of Alpha-amanitin proprotein 1 from Galerina marginata (strain CBS 339.88).